A 76-amino-acid chain; its full sequence is Conotoxin Im6.9 (76 aa).

An N-terminal signal peptide occupies residues 1–19 (MEKLTILLLVTAVLMSTQA). Positions 20–45 (LMQSGIEKRQRAKIKFFSKRKTTAER) are excised as a propeptide. Cystine bridges form between cysteine 51–cysteine 65, cysteine 58–cysteine 69, and cysteine 64–cysteine 73.

Belongs to the conotoxin O2 superfamily. As to expression, expressed by the venom duct.

The protein resides in the secreted. Functionally, probable neurotoxin. The polypeptide is Conotoxin Im6.9 (Conus imperialis (Imperial cone)).